The primary structure comprises 392 residues: Queuine tRNA-ribosyltransferase (392 aa).

Aspartate 93 acts as the Proton acceptor in catalysis. Substrate contacts are provided by residues 93-97, aspartate 147, glutamine 189, and glycine 216; that span reads DSGGY. Positions 247–253 are RNA binding; the sequence is GVGAPED. Residue aspartate 266 is the Nucleophile of the active site. The tract at residues 271–275 is RNA binding; important for wobble base 34 recognition; sequence TRVAR. Zn(2+)-binding residues include cysteine 304, cysteine 306, cysteine 309, and histidine 335.

The protein belongs to the queuine tRNA-ribosyltransferase family. As to quaternary structure, homodimer. Within each dimer, one monomer is responsible for RNA recognition and catalysis, while the other monomer binds to the replacement base PreQ1. Requires Zn(2+) as cofactor.

The enzyme catalyses 7-aminomethyl-7-carbaguanine + guanosine(34) in tRNA = 7-aminomethyl-7-carbaguanosine(34) in tRNA + guanine. Its pathway is tRNA modification; tRNA-queuosine biosynthesis. Functionally, catalyzes the base-exchange of a guanine (G) residue with the queuine precursor 7-aminomethyl-7-deazaguanine (PreQ1) at position 34 (anticodon wobble position) in tRNAs with GU(N) anticodons (tRNA-Asp, -Asn, -His and -Tyr). Catalysis occurs through a double-displacement mechanism. The nucleophile active site attacks the C1' of nucleotide 34 to detach the guanine base from the RNA, forming a covalent enzyme-RNA intermediate. The proton acceptor active site deprotonates the incoming PreQ1, allowing a nucleophilic attack on the C1' of the ribose to form the product. After dissociation, two additional enzymatic reactions on the tRNA convert PreQ1 to queuine (Q), resulting in the hypermodified nucleoside queuosine (7-(((4,5-cis-dihydroxy-2-cyclopenten-1-yl)amino)methyl)-7-deazaguanosine). This chain is Queuine tRNA-ribosyltransferase, found in Dehalococcoides mccartyi (strain ATCC BAA-2266 / KCTC 15142 / 195) (Dehalococcoides ethenogenes (strain 195)).